The sequence spans 617 residues: Dihydroxy-acid dehydratase (617 aa).

A Mg(2+)-binding site is contributed by D81. C122 is a [2Fe-2S] cluster binding site. D123 and K124 together coordinate Mg(2+). N6-carboxylysine is present on K124. [2Fe-2S] cluster is bound at residue C195. E491 serves as a coordination point for Mg(2+). S517 functions as the Proton acceptor in the catalytic mechanism.

Belongs to the IlvD/Edd family. Homodimer. It depends on [2Fe-2S] cluster as a cofactor. The cofactor is Mg(2+).

The enzyme catalyses (2R)-2,3-dihydroxy-3-methylbutanoate = 3-methyl-2-oxobutanoate + H2O. It carries out the reaction (2R,3R)-2,3-dihydroxy-3-methylpentanoate = (S)-3-methyl-2-oxopentanoate + H2O. The protein operates within amino-acid biosynthesis; L-isoleucine biosynthesis; L-isoleucine from 2-oxobutanoate: step 3/4. Its pathway is amino-acid biosynthesis; L-valine biosynthesis; L-valine from pyruvate: step 3/4. Its function is as follows. Functions in the biosynthesis of branched-chain amino acids. Catalyzes the dehydration of (2R,3R)-2,3-dihydroxy-3-methylpentanoate (2,3-dihydroxy-3-methylvalerate) into 2-oxo-3-methylpentanoate (2-oxo-3-methylvalerate) and of (2R)-2,3-dihydroxy-3-methylbutanoate (2,3-dihydroxyisovalerate) into 2-oxo-3-methylbutanoate (2-oxoisovalerate), the penultimate precursor to L-isoleucine and L-valine, respectively. This is Dihydroxy-acid dehydratase from Caulobacter vibrioides (strain ATCC 19089 / CIP 103742 / CB 15) (Caulobacter crescentus).